The chain runs to 185 residues: Chromobox protein homolog 1 (185 aa).

Glycyl lysine isopeptide (Lys-Gly) (interchain with G-Cter in SUMO2) cross-links involve residues K9 and K33. One can recognise a Chromo 1 domain in the interval Y21–K79. Positions L63–G124 are disordered. Positions T73–S89 are enriched in basic and acidic residues. 2 positions are modified to phosphoserine: S89 and S91. Basic and acidic residues predominate over residues E96 to R121. Residues K99 and K150 each participate in a glycyl lysine isopeptide (Lys-Gly) (interchain with G-Cter in SUMO2) cross-link. The Chromo 2; shadow subtype domain maps to L117 to S175. S175 carries the post-translational modification Phosphoserine.

As to quaternary structure, homodimer. Interacts directly with CHAF1A, EMSY, LBR, TIF1/TIF1A and TRIM28/TIF1B PXVXL motif via the chromoshadow domain. Interacts directly with histone H3 methylated at 'Lys-9' via the chromo domain. Interacts with SUV39H1 and SETDB1, KMT5B and KMT5C. Interacts with PRDM6. Interacts with POGZ. Interacts with CHAMP1. Interacts with INCENP. Interacts with SGO1; the CBX1 homodimer binds to one molecule of SGO1. Interacts with LRIF1 (via PxVxL motif). Interacts with HDGFL2. Interacts with CHD3. Interacts with CHD4. Post-translationally, not phosphorylated. Ubiquitinated. Expressed in all adult and embryonic tissues.

It is found in the nucleus. In terms of biological role, component of heterochromatin. Recognizes and binds histone H3 tails methylated at 'Lys-9', leading to epigenetic repression. Interaction with lamin B receptor (LBR) can contribute to the association of the heterochromatin with the inner nuclear membrane. This is Chromobox protein homolog 1 (CBX1) from Homo sapiens (Human).